Here is a 1143-residue protein sequence, read N- to C-terminus: Disease resistance protein Pikm1-TS (1143 aa).

A structured coiled coil (CC) domain region spans residues 1–190; it reads MEAAAMAVTA…PLRIMGGEMQ (190 aa). Residues 189–258 enclose the HMA domain; it reads MQKIVFKIPM…KVGPAMFLEV (70 aa). An HMA-like domain region spans residues 191-264; it reads KIVFKIPMVD…FLEVSQVKED (74 aa). An NB-ARC domain is found at 282 to 570; that stretch reads HEVKTICILG…WIAEGFVSEE (289 aa). 10 LRR repeats span residues 681–706, 708–731, 732–754, 756–777, 778–800, 802–823, 824–848, 945–968, 979–1002, and 1004–1027; these read FKRLRVLDLEDNKDIQDSHLQGICEQ, SLRVRYLGLKGTRIRKLPQEMRKL, KHLEILYVGSTRISELPQEIGEL, HLRILDVRNTDITELPLQIREL, QHLHTLDVRNTPISELPPQVGKL, NLKIMCVRSTGVRELPKEIGEL, NHLQTLDVRNTRVRELPWQAGQISQ, MPNLQTLVLRFEALPRQPITINGT, DSRVPRIAFHEDAMPNLKLLEFKF, and AGPASNDAIGITNLKSLQKVVFRC.

This sequence belongs to the disease resistance NB-LRR family. Interacts with AVR-Pik through its N-terminal part containing the HMA-like domain. As to expression, constitutively expressed.

Functionally, disease resistance (R) protein that specifically recognizes the AVR-Pik effector avirulence protein from M.oryzae. Resistance proteins guard the plant against pathogens that contain an appropriate avirulence protein via an indirect interaction with this avirulence protein. That triggers a defense system including the hypersensitive response, which restricts the pathogen growth. Contribution of Pikm-2 is required to recognize the effector avirulence protein AVR-Pik. This Oryza sativa subsp. japonica (Rice) protein is Disease resistance protein Pikm1-TS.